The primary structure comprises 403 residues: MVQISQIGAVLAVCSTLTVAAPTKGKARFNVPQVAVPMKAVHHPAVAYARALHKFGMKVPKAVSDAARGSVPTTPTKDDEQYVTQVTVGQGKLNLDLDTGSGDLWVFSTETPKDQSQGHNLYMPTSKSKRLDGYSWEITYGDMSSAGGDVFLDTVSIGNVTASSQAVESAKKVSDQFAKDKATDGLMGLSFSVLNTVQPKPQTTFFDTVLKQLEKPLFTCTLKHGQPGSYDFGYIDDSKHSGEIAYTNVDNSQGWWGFTAESYSIGGGSNSTHSFHGAQHRGTRGSSIDGIADTGTTLMLLSDDVVQEYYGKVQGAKNDQQQGGWVFPCDAKLPDFTLSISGYNAVVPGKFMNYQAVGSVCFGGLQSVGSSGGVPNIFGDVFLKSQFVVWDTEGPRIGFAPQA.

The first 20 residues, 1–20 (MVQISQIGAVLAVCSTLTVA), serve as a signal peptide directing secretion. Positions 21-67 (APTKGKARFNVPQVAVPMKAVHHPAVAYARALHKFGMKVPKAVSDAA) are cleaved as a propeptide — activation peptide. The region spanning 82 to 400 (YVTQVTVGQG…DTEGPRIGFA (319 aa)) is the Peptidase A1 domain. Residue Asp98 is part of the active site. Asn159 and Asn270 each carry an N-linked (GlcNAc...) asparagine glycan. Asp293 is an active-site residue. Cysteines 329 and 361 form a disulfide.

The protein belongs to the peptidase A1 family.

The protein localises to the secreted. It carries out the reaction Hydrolysis of proteins with broad specificity. Generally favors hydrophobic residues in P1 and P1', but also accepts Lys in P1, which leads to activation of trypsinogen. Does not clot milk.. Functionally, secreted aspartic endopeptidase that allows assimilation of proteinaceous substrates. Can catalyze hydrolysis of the major structural proteins of basement membrane, elastin, collagen, and laminin. Thought to play a significant role in virulence. This Arthroderma benhamiae (strain ATCC MYA-4681 / CBS 112371) (Trichophyton mentagrophytes) protein is Aspartic protease PEP1 (PEP1).